Consider the following 145-residue polypeptide: UPF0735 ACT domain-containing protein CLD_1535 (145 aa).

One can recognise an ACT domain in the interval 69–144 (TIGLLLGHER…NVIKVDLIAM (76 aa)).

It belongs to the UPF0735 family.

In Clostridium botulinum (strain Okra / Type B1), this protein is UPF0735 ACT domain-containing protein CLD_1535.